Here is a 123-residue protein sequence, read N- to C-terminus: Small ribosomal subunit protein uS13c (123 aa).

The disordered stretch occupies residues 90 to 123 (GKRHRNSLPVRGQRTRTNARSRRGAKKTVTGKKK). Over residues 102 to 123 (QRTRTNARSRRGAKKTVTGKKK) the composition is skewed to basic residues.

The protein belongs to the universal ribosomal protein uS13 family. In terms of assembly, part of the 30S ribosomal subunit.

The protein localises to the plastid. It localises to the chloroplast. Its function is as follows. Located at the top of the head of the 30S subunit, it contacts several helices of the 16S rRNA. The polypeptide is Small ribosomal subunit protein uS13c (Thalassiosira pseudonana (Marine diatom)).